The following is a 799-amino-acid chain: Homeobox protein engrailed (799 aa).

4 disordered regions span residues 189-331, 369-444, 554-664, and 678-705; these read LPSR…DATK, GNFL…SLRQ, HPFL…DKAK, and SDRP…RTAF. Residues 210–222 are compositionally biased toward polar residues; that stretch reads QSPSTSIRSNLVS. Composition is skewed to basic and acidic residues over residues 228–239 and 246–256; these read SRRDDQETSDSC and RAINDSERYDV. Polar residues-rich tracts occupy residues 284-299 and 377-401; these read LNLT…QLFH and HTFQ…SSPD. Low complexity predominate over residues 416–431; sequence ESLSSPSSSSSSSRSS. 2 stretches are compositionally biased toward basic and acidic residues: residues 608–619 and 629–648; these read DQKKRSRDESAS and VHLK…EKGN. The segment at residues 698–757 is a DNA-binding region (homeobox); it reads EKRPRTAFTNDQLQRLKREFDECRYLTETRRKNLADELGLTESQIKIWFQNKRAKIKKSV.

The protein belongs to the engrailed homeobox family. As to expression, expressed in the dorsal ectoderm of early gastrulae in a band corresponding to the peripheral area of the presumptive shell gland. Also expressed at four points along the posterior ectoderm. In late gastrulae, it is predominantly expressed in the peripheral ectoderm of the shell gland and in spots at the posterior end behind the presumptive foot. Expressed in late trochophore larvae at four points behind the foot, at two locations at the base of the foot and in the peripheral ectoderm of the shell gland.

It localises to the nucleus. In terms of biological role, may be involved in shell and shell gland formation during development. This is Homeobox protein engrailed from Lymnaea stagnalis (Great pond snail).